Consider the following 392-residue polypeptide: Serine protease ea (392 aa).

The first 19 residues, 1-19, serve as a signal peptide directing secretion; it reads MLKPSIICLFLGILAKSSA. Residues 20-127 constitute a propeptide, activation peptide; that stretch reads GQFYFPNEAA…GQCGNILSNR (108 aa). The region spanning 36 to 89 is the Clip domain; that stretch reads RCITPNRERALCIHLEDCKYLYGLLTTTPLRDTDRLYLSRSQCGYTNGKVLICC. Cystine bridges form between Cys37/Cys88, Cys47/Cys78, and Cys53/Cys89. N-linked (GlcNAc...) asparagine glycosylation is present at Asn107. 5 disulfides stabilise this stretch: Cys120/Cys260, Cys158/Cys174, Cys202/Cys212, Cys307/Cys324, and Cys334/Cys367. Residues 128–391 form the Peptidase S1 domain; sequence IYGGMKTKID…YVDWIQNTIE (264 aa). The active-site Charge relay system is the His173. The Ca(2+) site is built by Glu193, Asp195, Thr198, and Asp201. Asp240 (charge relay system) is an active-site residue. The active-site Charge relay system is the Ser338.

It belongs to the peptidase S1 family. CLIP subfamily. Interacts with Spn27A; the two proteins are covalently linked leading to inhibition of ea catalytic activity. Interacts (via Peptidase domain) with snk (via N-terminal prodomain); leads to proteolytic activation of ea by snk. Sulfation of a vitelline membrane component by pip is required for proteolytic cleavage of ea by snk but not for the interaction of ea with snk. In terms of processing, proteolytically cleaved by snk. Activation peptide and active catalytic domain remain associated by a disulfide bond. Processed ea/easter is present in extremely low amounts in the early embryo as it is rapidly converted into a high molecular mass complex made up of ea covalently bound to the serpin Spn27A. Zymogen activation is also controlled by a negative feedback loop from Dorsal.

It is found in the secreted. Activated proteolytically by snk; activation requires both activation of the ndl-gd-snk protease cascade and sulfation of a vitelline membrane component by pip. Inhibited by binding of the serpin Spn27A. In terms of biological role, component of the extracellular signaling pathway that establishes the dorsal-ventral pathway of the embryo. A protease cascade involving ndl, gd, snk and ea results in activation of the spz Toll receptor ligand; acts downstream of ndl, gd and snk and is required for proteolytic processing of spz. Activation of ea requires both activation of the ndl-gd-snk protease cascade and sulfation of a vitelline membrane component by pip. Localized activation of the Toll receptor in the ventral region of the embryo defines cell identities along the dorsal-ventral continuum. The polypeptide is Serine protease ea (Drosophila melanogaster (Fruit fly)).